Consider the following 160-residue polypeptide: Phosphopantetheine adenylyltransferase (160 aa).

A substrate-binding site is contributed by Thr11. ATP contacts are provided by residues 11-12 and His19; that span reads TF. Substrate-binding residues include Lys43, Thr75, and Arg89. ATP-binding positions include 90 to 92, Glu100, and 125 to 131; these read GLR and YSFLSSS.

Belongs to the bacterial CoaD family. Homohexamer. Mg(2+) is required as a cofactor.

The protein localises to the cytoplasm. The enzyme catalyses (R)-4'-phosphopantetheine + ATP + H(+) = 3'-dephospho-CoA + diphosphate. It participates in cofactor biosynthesis; coenzyme A biosynthesis; CoA from (R)-pantothenate: step 4/5. Functionally, reversibly transfers an adenylyl group from ATP to 4'-phosphopantetheine, yielding dephospho-CoA (dPCoA) and pyrophosphate. The protein is Phosphopantetheine adenylyltransferase of Listeria monocytogenes serotype 4b (strain CLIP80459).